A 533-amino-acid polypeptide reads, in one-letter code: NADH-quinone oxidoreductase subunit N (533 aa).

Transmembrane regions (helical) follow at residues 13-33, 40-60, 87-107, 141-161, 164-184, 200-220, 243-263, 275-295, 310-330, 337-357, 373-393, 417-437, 451-471, and 502-522; these read VWPLLVVFGVAAVGVLVEGFV, LVQAALAIAGVVVALVGTILV, PALFIWGMLLVFALGGALLFA, HTEVYPLMMFALGGMMLFAAA, LLTLFVALEVLSLPLYLLSGL, FMLGAFSSGFFLYGAALVYGF, LLIGIGMLSVGLLFKVGAVPF, PTAVTAFMAAGTKIAAFGAML, QPMLWIIAILTMLVGALIAIV, MLAYSSVAHTGFLLTGVLGVQ, VLFYLVTYGFAVVGAFAVVTL, VAGVFAFFLLSMAGIPLTAGF, GAWPVVIAAVLCSIIAVFFYV, and ATIFVGVAATLVLGVVPGPVL.

It belongs to the complex I subunit 2 family. As to quaternary structure, NDH-1 is composed of 14 different subunits. Subunits NuoA, H, J, K, L, M, N constitute the membrane sector of the complex.

The protein localises to the cell membrane. The enzyme catalyses a quinone + NADH + 5 H(+)(in) = a quinol + NAD(+) + 4 H(+)(out). NDH-1 shuttles electrons from NADH, via FMN and iron-sulfur (Fe-S) centers, to quinones in the respiratory chain. The immediate electron acceptor for the enzyme in this species is believed to be a menaquinone. Couples the redox reaction to proton translocation (for every two electrons transferred, four hydrogen ions are translocated across the cytoplasmic membrane), and thus conserves the redox energy in a proton gradient. In Nocardioides sp. (strain ATCC BAA-499 / JS614), this protein is NADH-quinone oxidoreductase subunit N.